The sequence spans 92 residues: Small ribosomal subunit protein bS20 (92 aa).

The segment at 1-24 (MANTTSAKKATRKIARRTDVNKAR) is disordered.

This sequence belongs to the bacterial ribosomal protein bS20 family.

Binds directly to 16S ribosomal RNA. This is Small ribosomal subunit protein bS20 from Rhizobium etli (strain ATCC 51251 / DSM 11541 / JCM 21823 / NBRC 15573 / CFN 42).